We begin with the raw amino-acid sequence, 168 residues long: tRNA-splicing endonuclease subunit Sen15 (168 aa).

Positions 1–32 (MEERSDSEPTPGCSGPGPAPVRDGGGAHTWAP) are disordered. Residues S7 and S165 each carry the phosphoserine modification.

This sequence belongs to the SEN15 family. In terms of assembly, homodimer. tRNA splicing endonuclease is a heterotetramer composed of TSEN2, TSEN15, TSEN34/LENG5 and TSEN54. tRNA splicing endonuclease complex also contains proteins of the pre-mRNA 3' end processing machinery such as CLP1, CPSF1, CPSF4 and CSTF2.

It localises to the nucleus. The protein localises to the nucleolus. In terms of biological role, non-catalytic subunit of the tRNA-splicing endonuclease complex, a complex responsible for identification and cleavage of the splice sites in pre-tRNA. It cleaves pre-tRNA at the 5' and 3' splice sites to release the intron. The products are an intron and two tRNA half-molecules bearing 2',3' cyclic phosphate and 5'-OH termini. There are no conserved sequences at the splice sites, but the intron is invariably located at the same site in the gene, placing the splice sites an invariant distance from the constant structural features of the tRNA body. The tRNA splicing endonuclease is also involved in mRNA processing via its association with pre-mRNA 3'-end processing factors, establishing a link between pre-tRNA splicing and pre-mRNA 3'-end formation, suggesting that the endonuclease subunits function in multiple RNA-processing events. This is tRNA-splicing endonuclease subunit Sen15 (Tsen15) from Mus musculus (Mouse).